The primary structure comprises 72 residues: U-poneritoxin(01)-Om7a (72 aa).

A signal peptide spans 1–27 (MKPSGLTFAFLVVFMMAIMYNSVQVTA). Residues 28 to 45 (DADADAEAEALANALAEA) constitute a propeptide that is removed on maturation.

It belongs to the formicidae venom precursor-01 superfamily. In terms of tissue distribution, expressed by the venom gland.

Its subcellular location is the secreted. In terms of biological role, peptide with unknown function that does not resemble any other pilosulin-like peptide and appears to have a coiled coil structure. The protein is U-poneritoxin(01)-Om7a of Odontomachus monticola (Trap-jaw ant).